The sequence spans 346 residues: Heterogeneous nuclear ribonucleoprotein A1 (346 aa).

RRM domains lie at 23–123 and 114–191; these read RKIF…GVRE and KRLY…KGLS. Basic and acidic residues-rich tracts occupy residues 92–107 and 189–215; these read TVDPKRAVPRDDKNRS and GLSKDEMSKAQMNRDRETRGGRSRDGQ. Disordered stretches follow at residues 92–111 and 189–346; these read TVDPKRAVPRDDKNRSESNV and GLSK…NRNY. 2 stretches are compositionally biased toward gly residues: residues 216-296 and 303-331; these read RGGY…GWGG and GGWGGPQQGGGGGGWGGQGQQQGGWGGQS. Residues 332 to 346 show a composition bias toward low complexity; the sequence is GAQQWAHAQGGNRNY.

It localises to the nucleus. The protein resides in the chromosome. It is found in the telomere. In terms of biological role, this protein is a component of ribonucleosomes. Overexpression gradually increases telomere length, leading to increase lifespan. This is Heterogeneous nuclear ribonucleoprotein A1 from Caenorhabditis elegans.